A 437-amino-acid polypeptide reads, in one-letter code: Carbonic anhydrase 9 (437 aa).

Positions 1–31 (MASLGPSPWAPLSTPAPTAQLLLFLLLQVSA) are cleaved as a signal peptide. The proteoglycan-like (PG) stretch occupies residues 32–95 (QPQGLSGMQG…RMEESLGLED (64 aa)). The Extracellular segment spans residues 32–390 (QPQGLSGMQG…HVNSCFTAGD (359 aa)). The segment at 34-118 (QGLSGMQGEP…HGDEKGGGHS (85 aa)) is disordered. The segment covering 50–79 (SGEDELGVDVLPSEEDAPEEADPPDGEDPP) has biased composition (acidic residues). The tract at residues 96 to 390 (LSTPEAPEHS…HVNSCFTAGD (295 aa)) is catalytic. T98 carries O-linked (GlcNAc...) threonine glycosylation. In terms of domain architecture, Alpha-carbonic anhydrase spans 118–369 (SHWSYGGTLL…LNGRTIEASF (252 aa)). C135 and C315 are oxidised to a cystine. The Proton donor/acceptor role is filled by H179. Zn(2+)-binding residues include H205, H207, and H230. 311-312 (TT) contributes to the substrate binding site. Residue N325 is glycosylated (N-linked (GlcNAc...) asparagine). Residues 391–411 (ILALVFGLLFAVTSIAFLLQL) traverse the membrane as a helical segment. Over 412–437 (RRQHRHRSGTKDRVSYSPAEMTETGA) the chain is Cytoplasmic. The residue at position 427 (Y427) is a Phosphotyrosine.

It belongs to the alpha-carbonic anhydrase family. In terms of assembly, forms oligomers linked by disulfide bonds. Zn(2+) serves as cofactor. Asn-325 bears high-mannose type glycan structures.

The protein localises to the nucleus. Its subcellular location is the nucleolus. It is found in the cell membrane. The protein resides in the cell projection. It localises to the microvillus membrane. The catalysed reaction is hydrogencarbonate + H(+) = CO2 + H2O. Inhibited by acetazolamide. Catalyzes the interconversion between carbon dioxide and water and the dissociated ions of carbonic acid (i.e. bicarbonate and hydrogen ions). The chain is Carbonic anhydrase 9 (Ca9) from Mus musculus (Mouse).